Here is a 637-residue protein sequence, read N- to C-terminus: MTNQDSDQAWGKLVKVDASPGSEIVLINSECTVGRKKDCDLSFPANKLVSGNHCKITHDQNSGKVWLEDMSTNGTVINMSKVVKKQTHLLQNGDVIYFVYRKNEPEQNIAYVYQSITPQESASHDVEDAGREEDSDLTETESEPAPVEPVIVKPLPQSGHEDPQPSTSSSSLHFYNMPLSTCSDVSARKNPVSSSAVCKGDSTSSGSPAQTRLKWTCWTDGEPEEEMQRKRRKTDRDDPGFGSAHSDASADIPLRGASGKEKTEGATTDKMEESLTCIICQDLLYDCISVQPCMHTFCAACYSGWMERSSFCPTCRCPVERIRKNHILNNLVEAYLLQHPEKCRTEDDLRSMDARNKITQDMLQPKVERSFSDEEASSDYLFELSDNDSDISDMSQPYMMCRQCPGYRKELSSALWICESAQSESLAKTAGDGPSTSSDSTTAAPQEFRCPPQASHLICTCCLQPMPDRRFEHLPPQVSPQHCLVCQKPFCHVYWGCPRIGCHGCLARFSELNLNDKCLDGVFNGNQYESEVLQNYLSCRGMSWRHLLQDSLQALQQGLYHLSDYRITANSFLCYCCGLRTFRELAYKYRERIPPSELPDAVTNRPNCYWGRNCRTQVKAHHALKFNHICEQTRFKN.

The FHA domain maps to 31 to 82; sequence CTVGRKKDCDLSFPANKLVSGNHCKITHDQNSGKVWLEDMSTNGTVINMSKV. Disordered stretches follow at residues 120-172 and 193-267; these read ESAS…SSSL and SSSA…EGAT. Over residues 130-142 the composition is skewed to acidic residues; that stretch reads GREEDSDLTETES. Positions 193–210 are enriched in polar residues; sequence SSSAVCKGDSTSSGSPAQ. Basic and acidic residues predominate over residues 258-267; sequence SGKEKTEGAT. Residues 277–316 form an RING-type zinc finger; it reads CIICQDLLYDCISVQPCMHTFCAACYSGWMERSSFCPTCR. The disordered stretch occupies residues 428–447; the sequence is KTAGDGPSTSSDSTTAAPQE. The segment covering 429 to 445 has biased composition (low complexity); that stretch reads TAGDGPSTSSDSTTAAP. The segment at 606–628 adopts a PBZ-type zinc-finger fold; the sequence is PNCYWGRNCRTQVKAHHALKFNH.

It belongs to the CHFR family.

It localises to the nucleus. It is found in the PML body. It catalyses the reaction S-ubiquitinyl-[E2 ubiquitin-conjugating enzyme]-L-cysteine + [acceptor protein]-L-lysine = [E2 ubiquitin-conjugating enzyme]-L-cysteine + N(6)-ubiquitinyl-[acceptor protein]-L-lysine.. It functions in the pathway protein modification; protein ubiquitination. E3 ubiquitin-protein ligase that functions in the antephase checkpoint by actively delaying passage into mitosis in response to microtubule poisons. Acts in early prophase before chromosome condensation, when the centrosome move apart from each other along the periphery of the nucleus. Probably involved in signaling the presence of mitotic stress caused by microtubule poisons by mediating the 'Lys-48'-linked ubiquitination of target proteins, leading to their degradation by the proteasome. May also promote the formation of 'Lys-63'-linked polyubiquitin chains and functions with the specific ubiquitin-conjugating ubc13-mms2 (ube2n-ube2v2) heterodimer. Substrates that are polyubiquitinated at 'Lys-63' are usually not targeted for degradation, but are rather involved in signaling cellular stress. The chain is E3 ubiquitin-protein ligase CHFR (chfr) from Danio rerio (Zebrafish).